We begin with the raw amino-acid sequence, 439 residues long: Proline--tRNA ligase (439 aa).

This sequence belongs to the class-II aminoacyl-tRNA synthetase family. ProS type 2 subfamily. Homodimer.

Its subcellular location is the cytoplasm. The catalysed reaction is tRNA(Pro) + L-proline + ATP = L-prolyl-tRNA(Pro) + AMP + diphosphate. Functionally, catalyzes the attachment of proline to tRNA(Pro) in a two-step reaction: proline is first activated by ATP to form Pro-AMP and then transferred to the acceptor end of tRNA(Pro). This is Proline--tRNA ligase from Hyphomonas neptunium (strain ATCC 15444).